Here is a 986-residue protein sequence, read N- to C-terminus: MAPLRLSRANPLAFARWPVTLITAVVYLAFLIPLLIVHHVVPSPPTANPNGLDLTQAWADLQVLTDGFHPYNSRRNDEVHTWLLQRIHEILDAAPPADQYLSVDEEKPKPAVFVFDDTQSNLSFVGNSLSSSNTAVYFEGTNILVYIRGSDDDHENWWEEPNGVPSGKGGVLVNAHYDSVSTGYGATDDGVGVVTCLQLIQYFMTPGHAPRRGLVVLLNNGEEDYLNGARVYGQHPISKFPHTFLNLEGAGAGGRAILFRSSDTEVTRPYMSSKYPFGSVLAADGFATGLIGSQTDYVVFEVDLGLRGLDVAFMEPRARYHTEQDDSRHTSKSSLWHMLSAAVATTEGLVSDKSDQFEGAPTDDAKVASGSGSKAVWFDLFGTTFVLFELHTLFALSVTLLVVAPLALLVTGIALTRADKMYLFRTSAKADESLDSVPLQGLRGFFRFPFLFAIPTAVTVGLAYLVTKVNPLIIHSSEYAVWSMMLSAWTFLAWFVSRMADFARPTALHRIYTLTWMFVLAWVLLVISTVYQNQRGLAGSYSVFFFFSGTFLATWISYLELFSLPRKSEYANQNRPTSRRASSYGGSRLGTASGEDHEEDDHDAEEEEEEQEPTESTSLLGGGQRTTFANYVRVAGDHRDSDTDHHYYPGVYKHEQRWSASLPTWTWTLQFLLMAPLVLIMVGPLALLLTSALHQTGQDGSSSLFIYVAIAALTTFLLTPLLPFIHRHTYHLPVFLLLVFLGTLIYNLVAFPFSPTNRLKLFFIQDIDLSTGSTTASLAGVQPYVHAAASTLPSTANQNITCTEHTTRGTKCAWPGLAPRVVPDTPYSDWLDFTISQQHNTTDDKEGDEDTHHPRKARITLSGRNTRACKLLFDSPISSFAVLGSSTDPRFPTSSPHGTKEIRLWSREWENEWVVDVAWTTSTNDDSEEGDEGEGKLNGKAVCLWSDNNSAGVIPALDEVRQFAPSWVAVSKAADGLVEGWKGFSI.

Topologically, residues 1 to 16 (MAPLRLSRANPLAFAR) are cytoplasmic. The chain crosses the membrane as a helical span at residues 17–37 (WPVTLITAVVYLAFLIPLLIV). Residues 38–392 (HHVVPSPPTA…TTFVLFELHT (355 aa)) lie on the Vacuolar side of the membrane. The N-linked (GlcNAc...) asparagine glycan is linked to N121. The Zn(2+) site is built by H176 and D188. E222 acts as the Proton acceptor in catalysis. Zn(2+)-binding residues include E223, E248, and H321. A helical transmembrane segment spans residues 393–413 (LFALSVTLLVVAPLALLVTGI). Residues 414-444 (ALTRADKMYLFRTSAKADESLDSVPLQGLRG) are Cytoplasmic-facing. A helical transmembrane segment spans residues 445–465 (FFRFPFLFAIPTAVTVGLAYL). The Vacuolar segment spans residues 466–475 (VTKVNPLIIH). The helical transmembrane segment at 476–496 (SSEYAVWSMMLSAWTFLAWFV) threads the bilayer. The Cytoplasmic segment spans residues 497–510 (SRMADFARPTALHR). The chain crosses the membrane as a helical span at residues 511–531 (IYTLTWMFVLAWVLLVISTVY). The Vacuolar segment spans residues 532–535 (QNQR). Residues 536–556 (GLAGSYSVFFFFSGTFLATWI) form a helical membrane-spanning segment. The Cytoplasmic segment spans residues 557–668 (SYLELFSLPR…SASLPTWTWT (112 aa)). A compositionally biased stretch (polar residues) spans 573-585 (QNRPTSRRASSYG). Residues 573–622 (QNRPTSRRASSYGGSRLGTASGEDHEEDDHDAEEEEEEQEPTESTSLLGG) are disordered. The segment covering 596-613 (DHEEDDHDAEEEEEEQEP) has biased composition (acidic residues). Residues 669–689 (LQFLLMAPLVLIMVGPLALLL) traverse the membrane as a helical segment. The Vacuolar segment spans residues 690–704 (TSALHQTGQDGSSSL). The chain crosses the membrane as a helical span at residues 705–725 (FIYVAIAALTTFLLTPLLPFI). Topologically, residues 726-732 (HRHTYHL) are cytoplasmic. Residues 733-753 (PVFLLLVFLGTLIYNLVAFPF) traverse the membrane as a helical segment. Over 754–986 (SPTNRLKLFF…LVEGWKGFSI (233 aa)) the chain is Vacuolar. N-linked (GlcNAc...) asparagine glycosylation is found at N799, N840, and N948. Positions 840–859 (NTTDDKEGDEDTHHPRKARI) are disordered.

Belongs to the peptidase M28 family. Requires Zn(2+) as cofactor.

Its subcellular location is the vacuole membrane. Functionally, may be involved in vacuolar sorting and osmoregulation. In Aspergillus niger (strain ATCC MYA-4892 / CBS 513.88 / FGSC A1513), this protein is Vacuolar membrane protease.